The following is a 405-amino-acid chain: Probable glucan 1,3-beta-glucosidase A (405 aa).

Positions 1–26 (MFPRISQAAILAHSLLAVCTSAATLA) are cleaved as a signal peptide. The active-site Proton donor is Glu198. 2 disulfide bridges follow: Cys278-Cys403 and Cys304-Cys330. Glu296 acts as the Nucleophile in catalysis.

It belongs to the glycosyl hydrolase 5 (cellulase A) family. As to quaternary structure, monomer. Requires Mn(2+) as cofactor.

Its subcellular location is the secreted. The enzyme catalyses Successive hydrolysis of beta-D-glucose units from the non-reducing ends of (1-&gt;3)-beta-D-glucans, releasing alpha-glucose.. In terms of biological role, beta-glucanases participate in the metabolism of beta-glucan, the main structural component of the cell wall. It could also function biosynthetically as a transglycosylase. The chain is Probable glucan 1,3-beta-glucosidase A (exgA) from Emericella nidulans (strain FGSC A4 / ATCC 38163 / CBS 112.46 / NRRL 194 / M139) (Aspergillus nidulans).